The following is a 367-amino-acid chain: Alginate lyase (367 aa).

The signal sequence occupies residues 1–27 (MKTSHLIRIALPGALAAALLASQVSQA). Residues 65–66 (SK), 138–139 (HT), and Tyr256 each bind substrate.

The protein belongs to the polysaccharide lyase 5 family.

The protein localises to the periplasm. The catalysed reaction is Eliminative cleavage of alginate to give oligosaccharides with 4-deoxy-alpha-L-erythro-hex-4-enuronosyl groups at their non-reducing ends and beta-D-mannuronate at their reducing end.. Functionally, catalyzes the depolymerization of alginate by cleaving the beta-1,4 glycosidic bond between two adjacent sugar residues via a beta-elimination mechanism. May serve to degrade mislocalized alginate that is trapped in the periplasmic space. Acts preferentially on non-acetylated alginate or its precursor mannuronan. Is able to catalyze cleavage adjacent to either mannuronate or guluronate residues in alginate. Exhaustive digestion of alginate by AlgL generates dimeric and trimeric products. In addition to its enzymatic function, AlgL appears to be required for alginate export, maybe as part of a multi-protein alginate-secretion complex. The chain is Alginate lyase from Pseudomonas aeruginosa (strain ATCC 15692 / DSM 22644 / CIP 104116 / JCM 14847 / LMG 12228 / 1C / PRS 101 / PAO1).